Reading from the N-terminus, the 355-residue chain is Peptide chain release factor 1 (355 aa).

Gln233 is modified (N5-methylglutamine).

This sequence belongs to the prokaryotic/mitochondrial release factor family. Methylated by PrmC. Methylation increases the termination efficiency of RF1.

It localises to the cytoplasm. Functionally, peptide chain release factor 1 directs the termination of translation in response to the peptide chain termination codons UAG and UAA. The protein is Peptide chain release factor 1 of Bacillus cereus (strain ATCC 14579 / DSM 31 / CCUG 7414 / JCM 2152 / NBRC 15305 / NCIMB 9373 / NCTC 2599 / NRRL B-3711).